We begin with the raw amino-acid sequence, 287 residues long: Beta-lactamase GES-2 (287 aa).

Positions 1 to 18 are cleaved as a signal peptide; sequence MRFIHALLLAGIAHSAYA. The cysteines at positions 63 and 233 are disulfide-linked. The Nucleophile; acyl-ester intermediate role is filled by serine 64. Positions 67, 125, and 161 each coordinate a beta-lactam.

It belongs to the class-A beta-lactamase family.

It carries out the reaction a beta-lactam + H2O = a substituted beta-amino acid. Its activity is regulated as follows. Inhibited by the beta-lactamase-blocking agents clavulanic acid, sulbactam and tazobactam. In terms of biological role, extended-spectrum beta-lactamase (ESBL) which confers resistance to penicillins, as well as first, third and fourth-generation cephalosporins. Has modest carbapenem-hydrolyzing activity. Has cefotaxime-hydrolyzing activity. This Pseudomonas aeruginosa protein is Beta-lactamase GES-2.